The sequence spans 142 residues: MAP3K7 C-terminal-like protein (142 aa).

Detected in lung and peripheral blood leukocytes. Expressed predominantly in peripheral blood leukocytes and ubiquitously in adult and fetal tissues. Also expressed strongly in breast carcinoma GI-101, colon adenocarcinoma GI-112, and prostatic adenocarcinoma PC3.

This is MAP3K7 C-terminal-like protein (MAP3K7CL) from Homo sapiens (Human).